We begin with the raw amino-acid sequence, 106 residues long: Cell division topological specificity factor (106 aa).

It belongs to the MinE family.

Functionally, prevents the cell division inhibition by proteins MinC and MinD at internal division sites while permitting inhibition at polar sites. This ensures cell division at the proper site by restricting the formation of a division septum at the midpoint of the long axis of the cell. The chain is Cell division topological specificity factor from Prochlorococcus marinus subsp. pastoris (strain CCMP1986 / NIES-2087 / MED4).